The primary structure comprises 189 residues: Interleukin-23 subunit alpha (189 aa).

Positions 1–19 (MLGSTAVMLLLLLPWTAQT) are cleaved as a signal peptide.

It belongs to the IL-6 superfamily. As to quaternary structure, heterodimer with IL12B; disulfide-linked. The heterodimer is known as interleukin IL-23. Interacts with IL23R; this interaction enables recruitment of IL12RB1.

The protein localises to the secreted. In terms of biological role, associates with IL12B to form the pro-inflammatory cytokine IL-23 that plays different roles in innate and adaptive immunity. Released by antigen-presenting cells such as dendritic cells or macrophages, binds to a heterodimeric receptor complex composed of IL12RB1 and IL23R to activate JAK2 and TYK2 which then phosphorylate the receptor to form a docking site leading to the phosphorylation of STAT3 and STAT4. This process leads to activation of several pathways including p38 MAPK or NF-kappa-B and promotes the production of pro-inflammatory cytokines such as interleukin-17A/IL17A. In turn, participates in the early and effective intracellular bacterial clearance. Promotes the expansion and survival of T-helper 17 cells, a CD4-positive helper T-cell subset that produces IL-17, as well as other IL-17-producing cells. This chain is Interleukin-23 subunit alpha (IL23A), found in Cavia porcellus (Guinea pig).